Consider the following 528-residue polypeptide: O-methylsterigmatocystin oxidoreductase (528 aa).

Position 440 (Cys-440) interacts with heme.

It belongs to the cytochrome P450 family. Heme is required as a cofactor.

The catalysed reaction is 8-O-methylsterigmatocystin + 2 reduced [NADPH--hemoprotein reductase] + 2 O2 = aflatoxin B1 + methanol + 2 oxidized [NADPH--hemoprotein reductase] + CO2 + H2O + 2 H(+). The enzyme catalyses 8-O-methyldihydrosterigmatocystin + 2 reduced [NADPH--hemoprotein reductase] + 2 O2 = aflatoxin B2 + methanol + 2 oxidized [NADPH--hemoprotein reductase] + CO2 + H2O + 2 H(+). It participates in mycotoxin biosynthesis; aflatoxin biosynthesis. Functionally, converts O-methylsterigmatocystin (OMST) to aflatoxin B1 and converts dihydro-O-methylsterigmatocystin (DHOMST) to aflatoxin B2 in the aflatoxin biosynthesis pathway. The protein is O-methylsterigmatocystin oxidoreductase (ordA) of Aspergillus flavus.